A 213-amino-acid chain; its full sequence is Protein Syd (213 aa).

This sequence belongs to the Syd family.

The protein resides in the cell inner membrane. In terms of biological role, interacts with the SecY protein in vivo. May bind preferentially to an uncomplexed state of SecY, thus functioning either as a chelating agent for excess SecY in the cell or as a regulatory factor that negatively controls the translocase function. The sequence is that of Protein Syd from Shewanella halifaxensis (strain HAW-EB4).